Consider the following 192-residue polypeptide: dCTP deaminase, dUMP-forming (192 aa).

Residues 101-106 (KSSLGR), Asp-119, 127-129 (TLE), Gln-148, Tyr-162, and Gln-174 contribute to the dCTP site. Glu-129 (proton donor/acceptor) is an active-site residue. The interval 162–192 (YGSGADGSRYQGQRGPTASRSHVKFHRTHVE) is disordered. Polar residues predominate over residues 171-181 (YQGQRGPTASR). The segment covering 182 to 192 (SHVKFHRTHVE) has biased composition (basic residues).

It belongs to the dCTP deaminase family. Homotrimer.

The catalysed reaction is dCTP + 2 H2O = dUMP + NH4(+) + diphosphate. It functions in the pathway pyrimidine metabolism; dUMP biosynthesis; dUMP from dCTP: step 1/1. Functionally, bifunctional enzyme that catalyzes both the deamination of dCTP to dUTP and the hydrolysis of dUTP to dUMP without releasing the toxic dUTP intermediate. The protein is dCTP deaminase, dUMP-forming of Beutenbergia cavernae (strain ATCC BAA-8 / DSM 12333 / CCUG 43141 / JCM 11478 / NBRC 16432 / NCIMB 13614 / HKI 0122).